A 212-amino-acid polypeptide reads, in one-letter code: FMN-dependent NADH:quinone oxidoreductase (212 aa).

Residues Ser10, 16 to 18, and 98 to 101 each bind FMN; these read SFS and MWNF.

It belongs to the azoreductase type 1 family. Homodimer. FMN serves as cofactor.

The catalysed reaction is 2 a quinone + NADH + H(+) = 2 a 1,4-benzosemiquinone + NAD(+). It catalyses the reaction N,N-dimethyl-1,4-phenylenediamine + anthranilate + 2 NAD(+) = 2-(4-dimethylaminophenyl)diazenylbenzoate + 2 NADH + 2 H(+). Quinone reductase that provides resistance to thiol-specific stress caused by electrophilic quinones. Its function is as follows. Also exhibits azoreductase activity. Catalyzes the reductive cleavage of the azo bond in aromatic azo compounds to the corresponding amines. This chain is FMN-dependent NADH:quinone oxidoreductase, found in Desulfotalea psychrophila (strain LSv54 / DSM 12343).